The sequence spans 358 residues: scyllo-inositol 2-dehydrogenase (NADP(+)) IolW (358 aa).

Belongs to the Gfo/Idh/MocA family.

It catalyses the reaction scyllo-inositol + NADP(+) = scyllo-inosose + NADPH + H(+). Functionally, catalyzes the reversible NADPH-dependent reduction of scyllo-inosose (SIS) to scyllo-inositol (SI). Cannot use NADH instead of NADPH. May be involved in reduction of not only SIS but also various oxidized compounds manifested upon stressful conditions. The chain is scyllo-inositol 2-dehydrogenase (NADP(+)) IolW from Bacillus subtilis (strain 168).